A 515-amino-acid polypeptide reads, in one-letter code: Fatty acyl-CoA reductase 1 (515 aa).

Topologically, residues 1 to 465 are cytoplasmic; the sequence is MVSIPEYYEG…ARKHLNKLRN (465 aa). A helical transmembrane segment spans residues 466 to 483; sequence IRYGFNTILVILIWRIFI. The Peroxisomal segment spans residues 484–515; that stretch reads ARSQMARNIWYFVVSLCYKFLSYFRASSTMRY.

This sequence belongs to the fatty acyl-CoA reductase family.

The protein localises to the peroxisome membrane. It catalyses the reaction a long-chain fatty acyl-CoA + 2 NADPH + 2 H(+) = a long-chain primary fatty alcohol + 2 NADP(+) + CoA. The enzyme catalyses hexadecanoyl-CoA + 2 NADPH + 2 H(+) = hexadecan-1-ol + 2 NADP(+) + CoA. It carries out the reaction octadecanoyl-CoA + 2 NADPH + 2 H(+) = octadecan-1-ol + 2 NADP(+) + CoA. The catalysed reaction is (9Z)-octadecenoyl-CoA + 2 NADPH + 2 H(+) = (9Z)-octadecen-1-ol + 2 NADP(+) + CoA. It catalyses the reaction (9Z,12Z)-octadecadienoyl-CoA + 2 NADPH + 2 H(+) = (9Z,12Z)-octadecadien-1-ol + 2 NADP(+) + CoA. The enzyme catalyses eicosanoyl-CoA + 2 NADPH + 2 H(+) = eicosan-1-ol + 2 NADP(+) + CoA. It carries out the reaction 16-methylheptadecanoyl-CoA + 2 NADPH + 2 H(+) = 16-methylheptadecan-1-ol + 2 NADP(+) + CoA. The catalysed reaction is 18-methylnonadecanoyl-CoA + 2 NADPH + 2 H(+) = 18-methylnonadecan-1-ol + 2 NADP(+) + CoA. Catalyzes the reduction of saturated and unsaturated C16 or C18 fatty acyl-CoA to fatty alcohols. It plays an essential role in the production of ether lipids/plasmalogens which synthesis requires fatty alcohols. In parallel, it is also required for wax monoesters production since fatty alcohols also constitute a substrate for their synthesis. The protein is Fatty acyl-CoA reductase 1 of Gallus gallus (Chicken).